The sequence spans 174 residues: Achaete-scute homolog 3 (174 aa).

The tract at residues 92-105 (AFIRKRNERERQRV) is basic motif. A bHLH domain is found at 92–144 (AFIRKRNERERQRVKCVNEGYARLRRHLPEDYLEKRLSKVETLRAAIKYISYL). The segment at 106-144 (KCVNEGYARLRRHLPEDYLEKRLSKVETLRAAIKYISYL) is helix-loop-helix motif. Residues 153-174 (SETKKNPRTASCGSLDPALRVI) form a disordered region.

Efficient DNA binding requires dimerization with another bHLH protein. In terms of tissue distribution, expressed in the salivary duct cells. Also expressed at lower levels in testis and epididymis. Expressed in the olfactory epithelium (OE), in a subset of apical microvillar cells.

It localises to the nucleus. Transcriptional repressor. Inhibits myogenesis. Plays a role in progenitor cells which differentiate into ductal and acinar, but not myoepithelial, cell lineages in the salivary glands. Involved in the functions of the microvillar cells and Bowman's glands and probably, in a non-cell-autonomous manner, in the development or regeneration of a complete olfactory epithelium (OE). In Mus musculus (Mouse), this protein is Achaete-scute homolog 3 (Ascl3).